The chain runs to 344 residues: tRNA N6-adenosine threonylcarbamoyltransferase (344 aa).

2 residues coordinate Fe cation: His111 and His115. Residues 134–138, Asp167, Gly180, and Asn272 each bind substrate; that span reads LVSGG. Asp300 serves as a coordination point for Fe cation.

It belongs to the KAE1 / TsaD family. The cofactor is Fe(2+).

It localises to the cytoplasm. The catalysed reaction is L-threonylcarbamoyladenylate + adenosine(37) in tRNA = N(6)-L-threonylcarbamoyladenosine(37) in tRNA + AMP + H(+). Functionally, required for the formation of a threonylcarbamoyl group on adenosine at position 37 (t(6)A37) in tRNAs that read codons beginning with adenine. Is involved in the transfer of the threonylcarbamoyl moiety of threonylcarbamoyl-AMP (TC-AMP) to the N6 group of A37, together with TsaE and TsaB. TsaD likely plays a direct catalytic role in this reaction. The protein is tRNA N6-adenosine threonylcarbamoyltransferase of Idiomarina loihiensis (strain ATCC BAA-735 / DSM 15497 / L2-TR).